The chain runs to 296 residues: Acetylglutamate kinase (296 aa).

Substrate-binding positions include 67–68, Arg89, and Asn194; that span reads GG.

This sequence belongs to the acetylglutamate kinase family. ArgB subfamily.

Its subcellular location is the cytoplasm. It catalyses the reaction N-acetyl-L-glutamate + ATP = N-acetyl-L-glutamyl 5-phosphate + ADP. Its pathway is amino-acid biosynthesis; L-arginine biosynthesis; N(2)-acetyl-L-ornithine from L-glutamate: step 2/4. In terms of biological role, catalyzes the ATP-dependent phosphorylation of N-acetyl-L-glutamate. This chain is Acetylglutamate kinase, found in Brucella abortus (strain S19).